A 274-amino-acid polypeptide reads, in one-letter code: Energy-coupling factor transporter ATP-binding protein EcfA1 (274 aa).

Residues 11–245 (IELKNVKFKY…ERVIEIAKID (235 aa)) enclose the ABC transporter domain. 45 to 52 (GHNGSGKS) is an ATP binding site.

Belongs to the ABC transporter superfamily. Energy-coupling factor EcfA family. In terms of assembly, forms a stable energy-coupling factor (ECF) transporter complex composed of 2 membrane-embedded substrate-binding proteins (S component), 2 ATP-binding proteins (A component) and 2 transmembrane proteins (T component).

Its subcellular location is the cell membrane. In terms of biological role, ATP-binding (A) component of a common energy-coupling factor (ECF) ABC-transporter complex. Unlike classic ABC transporters this ECF transporter provides the energy necessary to transport a number of different substrates. The sequence is that of Energy-coupling factor transporter ATP-binding protein EcfA1 from Mycoplasma mobile (strain ATCC 43663 / 163K / NCTC 11711) (Mesomycoplasma mobile).